We begin with the raw amino-acid sequence, 431 residues long: Gamma-glutamyl phosphate reductase (431 aa).

The protein belongs to the gamma-glutamyl phosphate reductase family.

The protein localises to the cytoplasm. It catalyses the reaction L-glutamate 5-semialdehyde + phosphate + NADP(+) = L-glutamyl 5-phosphate + NADPH + H(+). Its pathway is amino-acid biosynthesis; L-proline biosynthesis; L-glutamate 5-semialdehyde from L-glutamate: step 2/2. Catalyzes the NADPH-dependent reduction of L-glutamate 5-phosphate into L-glutamate 5-semialdehyde and phosphate. The product spontaneously undergoes cyclization to form 1-pyrroline-5-carboxylate. The protein is Gamma-glutamyl phosphate reductase of Methylobacterium nodulans (strain LMG 21967 / CNCM I-2342 / ORS 2060).